The following is a 271-amino-acid chain: Ribosomal RNA small subunit methyltransferase A (271 aa).

S-adenosyl-L-methionine contacts are provided by histidine 11, leucine 13, glycine 38, glutamate 58, aspartate 86, and asparagine 101.

Belongs to the class I-like SAM-binding methyltransferase superfamily. rRNA adenine N(6)-methyltransferase family. RsmA subfamily.

Its subcellular location is the cytoplasm. The catalysed reaction is adenosine(1518)/adenosine(1519) in 16S rRNA + 4 S-adenosyl-L-methionine = N(6)-dimethyladenosine(1518)/N(6)-dimethyladenosine(1519) in 16S rRNA + 4 S-adenosyl-L-homocysteine + 4 H(+). Functionally, specifically dimethylates two adjacent adenosines (A1518 and A1519) in the loop of a conserved hairpin near the 3'-end of 16S rRNA in the 30S particle. May play a critical role in biogenesis of 30S subunits. In Helicobacter pylori (strain J99 / ATCC 700824) (Campylobacter pylori J99), this protein is Ribosomal RNA small subunit methyltransferase A.